The primary structure comprises 1020 residues: DNA-directed RNA polymerase 2, chloroplastic/mitochondrial (1020 aa).

A disordered region spans residues 314-336 (KKQKAEKDKQKEDGEHVTQEQEK). Catalysis depends on residues D721, K796, and D953.

This sequence belongs to the phage and mitochondrial RNA polymerase family. In terms of tissue distribution, the highest levels of expression are detected in the mature leaves. The level of expression is lowest in the cotyledons.

The protein resides in the plastid. It is found in the chloroplast. The protein localises to the mitochondrion. It carries out the reaction RNA(n) + a ribonucleoside 5'-triphosphate = RNA(n+1) + diphosphate. Functionally, DNA-dependent RNA polymerase catalyzes the transcription of DNA into RNA using the four ribonucleoside triphosphates as substrates. The protein is DNA-directed RNA polymerase 2, chloroplastic/mitochondrial (RPOT2) of Nicotiana sylvestris (Wood tobacco).